Consider the following 256-residue polypeptide: uncharacterized protein (256 aa).

Positions 1–24 (MIKRVNKLVLGISLLFLVISIAAG) are cleaved as a signal peptide. Residue C25 is the site of N-palmitoyl cysteine attachment. C25 carries the S-diacylglycerol cysteine lipid modification.

This sequence belongs to the staphylococcal tandem lipoprotein family.

Its subcellular location is the cell membrane. This is an uncharacterized protein from Staphylococcus aureus.